A 284-amino-acid chain; its full sequence is Bifunctional protein FolD (284 aa).

NADP(+)-binding positions include 166 to 168 and Ser-191; that span reads GRS.

Belongs to the tetrahydrofolate dehydrogenase/cyclohydrolase family. Homodimer.

It catalyses the reaction (6R)-5,10-methylene-5,6,7,8-tetrahydrofolate + NADP(+) = (6R)-5,10-methenyltetrahydrofolate + NADPH. It carries out the reaction (6R)-5,10-methenyltetrahydrofolate + H2O = (6R)-10-formyltetrahydrofolate + H(+). Its pathway is one-carbon metabolism; tetrahydrofolate interconversion. In terms of biological role, catalyzes the oxidation of 5,10-methylenetetrahydrofolate to 5,10-methenyltetrahydrofolate and then the hydrolysis of 5,10-methenyltetrahydrofolate to 10-formyltetrahydrofolate. In Leptospira interrogans serogroup Icterohaemorrhagiae serovar copenhageni (strain Fiocruz L1-130), this protein is Bifunctional protein FolD.